Consider the following 494-residue polypeptide: Uric acid degradation bifunctional protein PucL (494 aa).

Positions 1–174 (MFTMDDLNQM…EKGETQMKRT (174 aa)) are OHCU decarboxylase. His-68 serves as the catalytic Proton donor; for OHCU decarboxylase activity. 5-hydroxy-2-oxo-4-ureido-2,5-dihydro-1H-imidazole-5-carboxylate contacts are provided by residues Pro-69, 81–85 (SVREQ), and 116–120 (FILAV). The interval 175–494 (MSYGKGNVFA…AAEKCRSLKA (320 aa)) is urate oxidase. Lys-179 acts as the Charge relay system; for urate oxidase activity in catalysis. Lys-190 (charge relay system) is an active-site residue. Thr-239 (charge relay system; for urate oxidase activity) is an active-site residue. Residues Thr-239, Asp-240, Phe-349, Arg-366, Ile-414, Gln-415, and Asn-441 each coordinate urate.

The protein in the N-terminal section; belongs to the OHCU decarboxylase family. It in the C-terminal section; belongs to the uricase family.

The catalysed reaction is 5-hydroxy-2-oxo-4-ureido-2,5-dihydro-1H-imidazole-5-carboxylate + H(+) = (S)-allantoin + CO2. It catalyses the reaction urate + O2 + H2O = 5-hydroxyisourate + H2O2. It participates in purine metabolism; urate degradation; (S)-allantoin from urate: step 1/3. Its pathway is purine metabolism; urate degradation; (S)-allantoin from urate: step 3/3. Its function is as follows. Catalyzes two steps in the degradation of uric acid, i.e. the oxidation of uric acid to 5-hydroxyisourate (HIU) and the stereoselective decarboxylation of 2-oxo-4-hydroxy-4-carboxy-5-ureidoimidazoline (OHCU) to (S)-allantoin. The sequence is that of Uric acid degradation bifunctional protein PucL (pucL) from Bacillus subtilis (strain 168).